Reading from the N-terminus, the 794-residue chain is MFGAEDPANSSLVDNLGLTLPWSLNDPHFLTAGFSASTTTAALMSTLWIIVFAVPSERILGSLKFAITAALIHITSIPLGIGIAHLIEEADLNRWGNNMLADVLLTPDFWVFGVAAFASASMPLLWRRRTRLFLFTITLTLLLYTGTLADVTMLTATIIGTVAGELNRHRKTPGGRWLPGSLTVREARIMTAILVTAVAAGPVLAALNPLTHGPFSSATKLIWQPLVTEEHMHHLCHTDSTSDACQGALDQLQQHGVGPSVANLIPLILTVVLAMGLSRGRRLAWILAVLAQLISIAVLMFQLTKLSADSTDLLWSVNAFSVIVPWLVALAVLVFSRRAFQVKIDTTRISKSLGALMVTWLATAALWILATLFLPHAFHPHPTLGLAFKELPFRYLPPTIETVLSHQLFPRSPAGWAVFEWTGTLFWLVVAATLYHLLMGVPSNKAHEDQENAATLLRSGSGDHLSWMTIWGGNTYWWAPENAGYVAYRVKRGIAITLGEPILGPDSSVSKAELAAQFEEFASNQGWIVAWYSVCEEFSKERINAGHHTLRVAEEAVLSSANADFKGKHFQNVRTARNRAAKEGVSSIWTTWADLSAEMQHKIITLSEEWVSDKALPEMGFTLGTVNELSDPDTYLLLAIDEEEHLHGVTSWLPVYEKGRIVGYTLDVMRRDPQGFKSVIEFLISEAVVIARDHDLEWMSMSGAPLSTPPGVADDGTIGQILELLGRAMEPFYGFRSLAASKNKFHPEHHGWYLCYRDELSLPSIGLAVAACYLNEFPLPNWLKKTATSAPSHS.

The next 9 helical transmembrane spans lie at phenylalanine 34 to valine 54, isoleucine 67 to isoleucine 87, methionine 99 to serine 119, leucine 132 to threonine 152, valine 257 to leucine 277, leucine 283 to leucine 303, tryptophan 315 to phenylalanine 335, leucine 353 to phenylalanine 373, and tryptophan 421 to valine 441.

It is found in the cell membrane. This is an uncharacterized protein from Corynebacterium glutamicum (strain ATCC 13032 / DSM 20300 / JCM 1318 / BCRC 11384 / CCUG 27702 / LMG 3730 / NBRC 12168 / NCIMB 10025 / NRRL B-2784 / 534).